We begin with the raw amino-acid sequence, 513 residues long: ATP synthase subunit alpha (513 aa).

169–176 provides a ligand contact to ATP; that stretch reads GDRQCGKT.

It belongs to the ATPase alpha/beta chains family. F-type ATPases have 2 components, CF(1) - the catalytic core - and CF(0) - the membrane proton channel. CF(1) has five subunits: alpha(3), beta(3), gamma(1), delta(1), epsilon(1). CF(0) has three main subunits: a(1), b(2) and c(9-12). The alpha and beta chains form an alternating ring which encloses part of the gamma chain. CF(1) is attached to CF(0) by a central stalk formed by the gamma and epsilon chains, while a peripheral stalk is formed by the delta and b chains.

The protein localises to the cell inner membrane. The enzyme catalyses ATP + H2O + 4 H(+)(in) = ADP + phosphate + 5 H(+)(out). Its function is as follows. Produces ATP from ADP in the presence of a proton gradient across the membrane. The alpha chain is a regulatory subunit. This Alteromonas mediterranea (strain DSM 17117 / CIP 110805 / LMG 28347 / Deep ecotype) protein is ATP synthase subunit alpha.